Consider the following 123-residue polypeptide: Transmembrane protein 049L (123 aa).

Helical transmembrane passes span 67–87 (VFGALCVAFGIMLIGFLLWLV) and 104–121 (LSLQQMVFLITTCIGVYN).

It localises to the membrane. In Acheta domesticus (House cricket), this protein is Transmembrane protein 049L.